Here is a 225-residue protein sequence, read N- to C-terminus: CRISPR pre-crRNA endoribonuclease Cas5d (225 aa).

Belongs to the CRISPR-associated protein Cas5 family. Subtype I-C/Dvulg subfamily. The cofactor is Does not require a metal cofactor..

Functionally, CRISPR (clustered regularly interspaced short palindromic repeat) is an adaptive immune system that provides protection against mobile genetic elements (viruses, transposable elements and conjugative plasmids). CRISPR clusters contain spacers, sequences complementary to antecedent mobile elements, and target invading nucleic acids. CRISPR clusters are transcribed and processed into CRISPR RNA (crRNA). This protein is a sequence-specific endonuclease that cleaves pre-crRNA at G21 into mature crRNA. Does not cleave pre-crRNA associated with the T.thermophilus strain HB27 Cas5 protein (AC Q746C2) CRISPR locus. The reaction mechanism may proceed by an intramolecular attack of the 2'-hydroxyl group of G21 on the scissile phosphodiester, cutting the precursor 3' to G21 residue yielding 5'-hydroxyl and 2' and/or 3' ends lacking a hydroxyl group (perhaps a 2'/3' cyclic phosphodiester). The sequence is that of CRISPR pre-crRNA endoribonuclease Cas5d from Mannheimia succiniciproducens (strain KCTC 0769BP / MBEL55E).